A 569-amino-acid polypeptide reads, in one-letter code: ATP-dependent RNA helicase HAS1 (569 aa).

Disordered stretches follow at residues 1–57 (MSKG…DQNF) and 71–110 (FKEE…FEDL). Positions 34-45 (EEEISSDEEEAD) are enriched in acidic residues. The segment covering 71–85 (FKEEKKQKKNKEPKT) has biased composition (basic and acidic residues). Positions 105–133 (DKFEDLGLSEPTMRAIKDMGFEKMTKVQE) match the Q motif motif. In terms of domain architecture, Helicase ATP-binding spans 136–312 (IPPLLAGRDV…RISLRAGPLY (177 aa)). 149–156 (AKTGSGKT) is an ATP binding site. Residues 259 to 262 (DEAD) carry the DEAD box motif. The region spanning 326 to 496 (GLEQGYVTCD…NIQSQLTKLI (171 aa)) is the Helicase C-terminal domain.

This sequence belongs to the DEAD box helicase family. DDX18/HAS1 subfamily. In terms of assembly, associates in the nucleolus with the 60S and pre-60S ribosomal subunits.

The protein resides in the nucleus. The protein localises to the nucleolus. It catalyses the reaction ATP + H2O = ADP + phosphate + H(+). In terms of biological role, ATP-dependent RNA helicase involved in 40S ribosomal subunit biogenesis. Required for the processing and cleavage of 35S pre-rRNA at sites A0, A1, and A2, leading to mature 18S rRNA. This is ATP-dependent RNA helicase HAS1 (HAS1) from Meyerozyma guilliermondii (strain ATCC 6260 / CBS 566 / DSM 6381 / JCM 1539 / NBRC 10279 / NRRL Y-324) (Yeast).